A 366-amino-acid chain; its full sequence is Phospho-N-acetylmuramoyl-pentapeptide-transferase (366 aa).

10 helical membrane-spanning segments follow: residues 27–47, 71–91, 93–113, 138–158, 174–194, 205–225, 245–265, 268–288, 294–314, and 343–363; these read AALF…INSL, TPTM…LLWA, LSNV…AIGF, FVIA…SGIA, FMIN…VGAG, GLAI…AYLA, LAVV…FNAP, AIFM…TVAV, IVMA…IIQV, and QVVI…LSTL.

It belongs to the glycosyltransferase 4 family. MraY subfamily. The cofactor is Mg(2+).

Its subcellular location is the cell inner membrane. The catalysed reaction is UDP-N-acetyl-alpha-D-muramoyl-L-alanyl-gamma-D-glutamyl-meso-2,6-diaminopimeloyl-D-alanyl-D-alanine + di-trans,octa-cis-undecaprenyl phosphate = di-trans,octa-cis-undecaprenyl diphospho-N-acetyl-alpha-D-muramoyl-L-alanyl-D-glutamyl-meso-2,6-diaminopimeloyl-D-alanyl-D-alanine + UMP. It participates in cell wall biogenesis; peptidoglycan biosynthesis. Functionally, catalyzes the initial step of the lipid cycle reactions in the biosynthesis of the cell wall peptidoglycan: transfers peptidoglycan precursor phospho-MurNAc-pentapeptide from UDP-MurNAc-pentapeptide onto the lipid carrier undecaprenyl phosphate, yielding undecaprenyl-pyrophosphoryl-MurNAc-pentapeptide, known as lipid I. The protein is Phospho-N-acetylmuramoyl-pentapeptide-transferase of Rhizobium johnstonii (strain DSM 114642 / LMG 32736 / 3841) (Rhizobium leguminosarum bv. viciae).